The following is a 396-amino-acid chain: Argininosuccinate synthase (396 aa).

An ATP-binding site is contributed by 9-17; it reads AFSGGLDTT. Tyr86 contacts L-citrulline. ATP is bound at residue Gly116. L-aspartate-binding residues include Thr118, Asn122, and Asp123. Asn122 is a binding site for L-citrulline. L-citrulline is bound by residues Arg126, Ser172, Ser181, Glu254, and Tyr266.

The protein belongs to the argininosuccinate synthase family. Type 1 subfamily. Homotetramer.

It is found in the cytoplasm. The catalysed reaction is L-citrulline + L-aspartate + ATP = 2-(N(omega)-L-arginino)succinate + AMP + diphosphate + H(+). The protein operates within amino-acid biosynthesis; L-arginine biosynthesis; L-arginine from L-ornithine and carbamoyl phosphate: step 2/3. The protein is Argininosuccinate synthase of Halobacterium salinarum (strain ATCC 700922 / JCM 11081 / NRC-1) (Halobacterium halobium).